A 320-amino-acid polypeptide reads, in one-letter code: Malate dehydrogenase (320 aa).

Residues 10 to 15 and aspartate 34 contribute to the NAD(+) site; that span reads GSGMIG. Residues arginine 83 and arginine 89 each contribute to the substrate site. NAD(+)-binding positions include asparagine 96 and 119-121; that span reads ITN. Substrate contacts are provided by asparagine 121 and arginine 152. Residue histidine 176 is the Proton acceptor of the active site.

The protein belongs to the LDH/MDH superfamily. MDH type 3 family.

It catalyses the reaction (S)-malate + NAD(+) = oxaloacetate + NADH + H(+). Functionally, catalyzes the reversible oxidation of malate to oxaloacetate. The chain is Malate dehydrogenase from Maricaulis maris (strain MCS10) (Caulobacter maris).